The following is a 185-amino-acid chain: Elongation factor P (185 aa).

This sequence belongs to the elongation factor P family.

It localises to the cytoplasm. The protein operates within protein biosynthesis; polypeptide chain elongation. Its function is as follows. Involved in peptide bond synthesis. Stimulates efficient translation and peptide-bond synthesis on native or reconstituted 70S ribosomes in vitro. Probably functions indirectly by altering the affinity of the ribosome for aminoacyl-tRNA, thus increasing their reactivity as acceptors for peptidyl transferase. This is Elongation factor P from Thermoanaerobacter sp. (strain X514).